The following is a 1015-amino-acid chain: Tolloid-like protein 2 (1015 aa).

The signal sequence occupies residues 1–25 (MPRATALGALVSLLLLLPLPRGAGG). Disordered regions lie at residues 24 to 49 (GGLGERPDATADYSELDGEEGTEQQL) and 88 to 130 (VGAT…TTLL). A propeptide spanning residues 26–149 (LGERPDATAD…AKTFSPRVRR (124 aa)) is cleaved from the precursor. The span at 103–113 (SESSPDTTAMD) shows a compositional bias: polar residues. Over residues 115–125 (GTKEAGKDGRE) the composition is skewed to basic and acidic residues. The Peptidase M12A domain maps to 149-349 (RATTSRTERI…AQARKLYKCP (201 aa)). A glycan (N-linked (GlcNAc...) asparagine) is linked at asparagine 171. Cystine bridges form between cysteine 192–cysteine 348, cysteine 212–cysteine 234, cysteine 214–cysteine 215, and cysteine 351–cysteine 377. Histidine 242 contacts Zn(2+). Residue glutamate 243 is part of the active site. Zn(2+)-binding residues include histidine 246 and histidine 252. CUB domains follow at residues 351 to 463 (CGET…YEAT) and 464 to 576 (CGGD…FFKE). Residues asparagine 361 and asparagine 392 are each glycosylated (N-linked (GlcNAc...) asparagine). 12 cysteine pairs are disulfide-bonded: cysteine 404–cysteine 426, cysteine 464–cysteine 490, cysteine 517–cysteine 539, cysteine 580–cysteine 592, cysteine 588–cysteine 601, cysteine 603–cysteine 616, cysteine 620–cysteine 646, cysteine 673–cysteine 695, cysteine 736–cysteine 747, cysteine 743–cysteine 756, cysteine 758–cysteine 771, and cysteine 776–cysteine 802. Positions 576–617 (EVDECSWPDHGGCEHRCVNTLGSYKCACDPGYELAADKKMCE) constitute an EGF-like 1; calcium-binding domain. One can recognise a CUB 3 domain in the interval 620-732 (CGGFITKLNG…RGFRAHFFSD (113 aa)). N-linked (GlcNAc...) asparagine glycosylation is present at asparagine 628. Residues 732–772 (DKDECAKDNGGCQHECVNTFGSYLCRCRNGYWLHENGHDCK) form the EGF-like 2; calcium-binding domain. CUB domains follow at residues 776–888 (CAHK…HSTE) and 889–1005 (CGGR…YTST). Asparagine 805 carries N-linked (GlcNAc...) asparagine glycosylation. Disulfide bonds link cysteine 829–cysteine 851, cysteine 889–cysteine 919, and cysteine 946–cysteine 968. Arginine 963 and arginine 966 each carry omega-N-methylarginine.

Requires Zn(2+) as cofactor.

It is found in the secreted. Its function is as follows. Protease which specifically processes pro-lysyl oxidase. Required for the embryonic development. Predominant protease, which in the development, influences dorsal-ventral patterning and skeletogenesis. The sequence is that of Tolloid-like protein 2 (TLL2) from Homo sapiens (Human).